The primary structure comprises 120 residues: Large ribosomal subunit protein uL18 (120 aa).

This sequence belongs to the universal ribosomal protein uL18 family. In terms of assembly, part of the 50S ribosomal subunit; part of the 5S rRNA/L5/L18/L25 subcomplex. Contacts the 5S and 23S rRNAs.

Its function is as follows. This is one of the proteins that bind and probably mediate the attachment of the 5S RNA into the large ribosomal subunit, where it forms part of the central protuberance. The sequence is that of Large ribosomal subunit protein uL18 from Bacillus pumilus (strain SAFR-032).